The following is a 1793-amino-acid chain: Chitin synthase 5 (1793 aa).

The tract at residues 1–28 is disordered; that stretch reads MTNPRMSMYSLASEAPGGNRGTGQQSTQ. N-linked (GlcNAc...) asparagine glycans are attached at residues Asn70, Asn164, Asn638, Asn664, and Asn669. The next 2 helical transmembrane spans lie at 750-770 and 786-806; these read VWVFIVWAFTWWIPSPLLRYV and LVLCFFIFLMNALIVFWIVAF. The Cytochrome b5 heme-binding domain occupies 815–877; that stretch reads DKAYSQKEVD…GMNLDDYFVA (63 aa). N-linked (GlcNAc...) asparagine glycans are attached at residues Asn897, Asn1019, and Asn1023. Residues 1056–1076 form a helical membrane-spanning segment; it reads LLLAFSIMLCAVILLKFVSAL. A glycan (N-linked (GlcNAc...) asparagine) is linked at Asn1421. Helical transmembrane passes span 1452 to 1472, 1479 to 1499, and 1507 to 1527; these read LFGTIILPATCVYLGYLIYLV, FPLISIIMLAAVYGLQALIFI, and IGWMIIYILAFPIYSFVLPIY. 2 N-linked (GlcNAc...) asparagine glycosylation sites follow: Asn1534 and Asn1705. A DEK-C domain is found at 1735-1791; it reads GPDDGMIVEAIRTVLMEVDLDTVTKKQVRALVEQRLQSELVGERRTFMDRQIDHELA.

This sequence belongs to the chitin synthase family. Class V subfamily.

It is found in the cell membrane. The catalysed reaction is [(1-&gt;4)-N-acetyl-beta-D-glucosaminyl](n) + UDP-N-acetyl-alpha-D-glucosamine = [(1-&gt;4)-N-acetyl-beta-D-glucosaminyl](n+1) + UDP + H(+). In terms of biological role, polymerizes chitin, a structural polymer of the cell wall and septum, by transferring the sugar moiety of UDP-GlcNAc to the non-reducing end of the growing chitin polymer. Regulates Germination and Tolerance to Hyperosmotic Stress. Plays a key role in pathogenicity. Likely contributes to post-penetration virulence. The polypeptide is Chitin synthase 5 (Verticillium dahliae (strain VdLs.17 / ATCC MYA-4575 / FGSC 10137) (Verticillium wilt)).